Reading from the N-terminus, the 141-residue chain is Hemoglobin subunit alpha-1/2 (141 aa).

One can recognise a Globin domain in the interval Val1–Arg141. Ser3 is subject to Phosphoserine. An N6-succinyllysine mark is found at Lys7 and Lys11. N6-acetyllysine; alternate is present on Lys16. Position 16 is an N6-succinyllysine; alternate (Lys16). Tyr24 carries the phosphotyrosine modification. Ser35 carries the post-translational modification Phosphoserine. Lys40 bears the N6-succinyllysine mark. Residue Ser49 is modified to Phosphoserine. Residue His58 participates in O2 binding. His87 provides a ligand contact to heme b. The residue at position 102 (Ser102) is a Phosphoserine. Thr108 carries the phosphothreonine modification. Ser124 and Ser131 each carry phosphoserine. Residues Thr134 and Thr137 each carry the phosphothreonine modification. Ser138 is modified (phosphoserine).

This sequence belongs to the globin family. As to quaternary structure, heterotetramer of two alpha chains and two beta chains. As to expression, red blood cells.

Functionally, involved in oxygen transport from the lung to the various peripheral tissues. This Mandrillus sphinx (Mandrill) protein is Hemoglobin subunit alpha-1/2.